Consider the following 122-residue polypeptide: Glycine cleavage system H protein (122 aa).

The Lipoyl-binding domain occupies 19–101 (MVTVGVTHYA…ETEGWLWKMT (83 aa)). An N6-lipoyllysine modification is found at Lys-60.

Belongs to the GcvH family. The glycine cleavage system is composed of four proteins: P, T, L and H. (R)-lipoate is required as a cofactor.

Functionally, the glycine cleavage system catalyzes the degradation of glycine. The H protein shuttles the methylamine group of glycine from the P protein to the T protein. In Bartonella tribocorum (strain CIP 105476 / IBS 506), this protein is Glycine cleavage system H protein.